Reading from the N-terminus, the 445-residue chain is Phosphoglucosamine mutase (445 aa).

Residue Ser-102 is the Phosphoserine intermediate of the active site. Residues Ser-102, Asp-241, Asp-243, and Asp-245 each coordinate Mg(2+). Ser-102 is subject to Phosphoserine.

This sequence belongs to the phosphohexose mutase family. Mg(2+) is required as a cofactor. Post-translationally, activated by phosphorylation.

It catalyses the reaction alpha-D-glucosamine 1-phosphate = D-glucosamine 6-phosphate. Functionally, catalyzes the conversion of glucosamine-6-phosphate to glucosamine-1-phosphate. The polypeptide is Phosphoglucosamine mutase (Citrobacter koseri (strain ATCC BAA-895 / CDC 4225-83 / SGSC4696)).